The chain runs to 842 residues: Alanine--tRNA ligase (842 aa).

The Zn(2+) site is built by His549, His553, Cys650, and His654.

Belongs to the class-II aminoacyl-tRNA synthetase family. Zn(2+) serves as cofactor.

It localises to the cytoplasm. The enzyme catalyses tRNA(Ala) + L-alanine + ATP = L-alanyl-tRNA(Ala) + AMP + diphosphate. Its function is as follows. Catalyzes the attachment of alanine to tRNA(Ala) in a two-step reaction: alanine is first activated by ATP to form Ala-AMP and then transferred to the acceptor end of tRNA(Ala). Also edits incorrectly charged Ser-tRNA(Ala) and Gly-tRNA(Ala) via its editing domain. The sequence is that of Alanine--tRNA ligase from Campylobacter jejuni subsp. jejuni serotype O:2 (strain ATCC 700819 / NCTC 11168).